Consider the following 95-residue polypeptide: Co-chaperonin GroES (95 aa).

This sequence belongs to the GroES chaperonin family. Heptamer of 7 subunits arranged in a ring. Interacts with the chaperonin GroEL.

The protein localises to the cytoplasm. In terms of biological role, together with the chaperonin GroEL, plays an essential role in assisting protein folding. The GroEL-GroES system forms a nano-cage that allows encapsulation of the non-native substrate proteins and provides a physical environment optimized to promote and accelerate protein folding. GroES binds to the apical surface of the GroEL ring, thereby capping the opening of the GroEL channel. This is Co-chaperonin GroES from Maricaulis maris (strain MCS10) (Caulobacter maris).